The primary structure comprises 158 residues: C-type lectin galactose-binding isoform (158 aa).

Residues 1 to 23 form the signal peptide; sequence MGRFLLVTLSLLVVAFSLNGANS. Cystine bridges form between Cys26/Cys37, Cys54/Cys154, and Cys129/Cys146. The 123-residue stretch at 33–155 folds into the C-type lectin domain; sequence RNGFCYKVFN…CTALRPFLCQ (123 aa). Ca(2+) is bound by residues Gln119, Asp121, and Glu127. The short motif at 119–121 is the Galactose-binding element; the sequence is QPD. Asn134 carries an N-linked (GlcNAc...) asparagine glycan. Ca(2+)-binding residues include Asn142 and Asp143.

Belongs to the true venom lectin family. In terms of assembly, homodimer; disulfide-linked. In terms of tissue distribution, expressed by the venom gland.

The protein localises to the secreted. Galactose-binding lectin that binds to and agglutinates erythrocytes in a calcium-dependent manner. The polypeptide is C-type lectin galactose-binding isoform (Pseudechis porphyriacus (Red-bellied black snake)).